The following is a 327-amino-acid chain: tRNA dimethylallyltransferase (327 aa).

14–21 (GPTASGKT) serves as a coordination point for ATP. 16–21 (TASGKT) serves as a coordination point for substrate. Interaction with substrate tRNA stretches follow at residues 39-42 (DSAL) and 163-167 (QRIQR).

The protein belongs to the IPP transferase family. As to quaternary structure, monomer. Mg(2+) is required as a cofactor.

The enzyme catalyses adenosine(37) in tRNA + dimethylallyl diphosphate = N(6)-dimethylallyladenosine(37) in tRNA + diphosphate. Functionally, catalyzes the transfer of a dimethylallyl group onto the adenine at position 37 in tRNAs that read codons beginning with uridine, leading to the formation of N6-(dimethylallyl)adenosine (i(6)A). This is tRNA dimethylallyltransferase from Xanthomonas oryzae pv. oryzae (strain KACC10331 / KXO85).